The sequence spans 371 residues: Vasopressin V2 receptor (371 aa).

A disordered region spans residues 1–27 (MILVSTTSAVPGALSSPSSPSNSSQEE). Residues 1–38 (MILVSTTSAVPGALSSPSSPSNSSQEELLDDRDPLLVR) lie on the Extracellular side of the membrane. A compositionally biased stretch (low complexity) spans 15 to 24 (SSPSSPSNSS). Residue N22 is glycosylated (N-linked (GlcNAc...) asparagine). Residues 39 to 63 (AELALLSTIFVAVALSNGLVLGALI) form a helical membrane-spanning segment. Residues 64–77 (RRGRRGRWAPMHVF) are Cytoplasmic-facing. A helical transmembrane segment spans residues 78 to 98 (ISHLCLADLAVALFQVLPQLA). Residues 99–113 (WDATDRFHGPDALCR) are Extracellular-facing. The helical transmembrane segment at 114–135 (AVKYLQMVGMYASSYMILAMTL) threads the bilayer. The Cytoplasmic portion of the chain corresponds to 136 to 159 (DRHRAICRPMLAYRHGGGARWNRP). A helical membrane pass occupies residues 160-180 (VLVAWAFSLLLSLPQLFIFAQ). At 181-200 (RDVGNGSGVFDCWARFAEPW) the chain is on the extracellular side. N185 carries an N-linked (GlcNAc...) asparagine glycan. The helical transmembrane segment at 201–220 (GLRAYVTWIALMVFVAPALG) threads the bilayer. Topologically, residues 221–271 (IAACQVLIFREIHASLVPGPSERAGRRRRGHRTGSPSEGAHVSAAMAKTVR) are cytoplasmic. Residues 240 to 259 (PSERAGRRRRGHRTGSPSEG) are disordered. The chain crosses the membrane as a helical span at residues 272-293 (MTLVIVIVYVLCWAPFFLVQLW). Residues 294–308 (AAWDPEAPLERPPFV) lie on the Extracellular side of the membrane. The helical transmembrane segment at 309-328 (LLMLLASLNSCTNPWIYASF) threads the bilayer. Topologically, residues 329-371 (SSSVSSELRSLLCCAQRHTTHSLGPQDESCATASSSLMKDTPS) are cytoplasmic. 2 S-palmitoyl cysteine lipidation sites follow: C341 and C342. Residues 349 to 371 (HSLGPQDESCATASSSLMKDTPS) are disordered. A compositionally biased stretch (polar residues) spans 357-371 (SCATASSSLMKDTPS).

It belongs to the G-protein coupled receptor 1 family. Vasopressin/oxytocin receptor subfamily. In terms of assembly, interacts with ARRDC4. Identified in a complex containing at least ARRDC4, V2R and HGS. Interacts with TMEM147. In terms of tissue distribution, highly expressed in kidney (at protein level) and moderately expressed in liver (at protein level). No or extremely low expression in left ventricule, muscle, bone and brain (at protein level).

It localises to the cell membrane. Functionally, receptor for arginine vasopressin. The activity of this receptor is mediated by G proteins which activate adenylate cyclase. Involved in renal water reabsorption. The chain is Vasopressin V2 receptor (Avpr2) from Mus musculus (Mouse).